Here is a 357-residue protein sequence, read N- to C-terminus: Probable cinnamyl alcohol dehydrogenase 1 (357 aa).

Cys47 contacts Zn(2+). Residue Thr49 coordinates NADP(+). 7 residues coordinate Zn(2+): His69, Glu70, Cys100, Cys103, Cys106, Cys114, and Cys163. NADP(+) is bound by residues Thr167, 188–193 (GLGGVG), 211–216 (SSSNKK), Thr251, Gly275, and 298–300 (SFI).

It belongs to the zinc-containing alcohol dehydrogenase family. As to quaternary structure, homodimer. Zn(2+) is required as a cofactor. In terms of processing, the N-terminus is blocked.

The enzyme catalyses (E)-cinnamyl alcohol + NADP(+) = (E)-cinnamaldehyde + NADPH + H(+). It catalyses the reaction (E)-coniferol + NADP(+) = (E)-coniferaldehyde + NADPH + H(+). The catalysed reaction is (E)-sinapyl alcohol + NADP(+) = (E)-sinapaldehyde + NADPH + H(+). It carries out the reaction (E)-4-coumaroyl alcohol + NADP(+) = (E)-4-coumaraldehyde + NADPH + H(+). The enzyme catalyses (E)-caffeyl alcohol + NADP(+) = (E)-caffeyl aldehyde + NADPH + H(+). The protein operates within aromatic compound metabolism; phenylpropanoid biosynthesis. Involved in lignin biosynthesis. Catalyzes the final step specific for the production of lignin monomers. Catalyzes the NADPH-dependent reduction of coniferaldehyde, 5-hydroxyconiferaldehyde, sinapaldehyde, 4-coumaraldehyde and caffeyl aldehyde to their respective alcohols. In Nicotiana tabacum (Common tobacco), this protein is Probable cinnamyl alcohol dehydrogenase 1.